A 164-amino-acid polypeptide reads, in one-letter code: 3-isopropylmalate dehydratase small subunit 2 (164 aa).

It belongs to the LeuD family. LeuD type 2 subfamily. As to quaternary structure, heterodimer of LeuC and LeuD.

It catalyses the reaction (2R,3S)-3-isopropylmalate = (2S)-2-isopropylmalate. The protein operates within amino-acid biosynthesis; L-leucine biosynthesis; L-leucine from 3-methyl-2-oxobutanoate: step 2/4. Its function is as follows. Catalyzes the isomerization between 2-isopropylmalate and 3-isopropylmalate, via the formation of 2-isopropylmaleate. In Pyrococcus furiosus (strain ATCC 43587 / DSM 3638 / JCM 8422 / Vc1), this protein is 3-isopropylmalate dehydratase small subunit 2 (leuD2).